We begin with the raw amino-acid sequence, 444 residues long: Methylenetetrahydrofolate--tRNA-(uracil-5-)-methyltransferase TrmFO (444 aa).

10 to 15 provides a ligand contact to FAD; sequence GAGLAG.

This sequence belongs to the MnmG family. TrmFO subfamily. It depends on FAD as a cofactor.

The protein resides in the cytoplasm. The catalysed reaction is uridine(54) in tRNA + (6R)-5,10-methylene-5,6,7,8-tetrahydrofolate + NADH + H(+) = 5-methyluridine(54) in tRNA + (6S)-5,6,7,8-tetrahydrofolate + NAD(+). The enzyme catalyses uridine(54) in tRNA + (6R)-5,10-methylene-5,6,7,8-tetrahydrofolate + NADPH + H(+) = 5-methyluridine(54) in tRNA + (6S)-5,6,7,8-tetrahydrofolate + NADP(+). Functionally, catalyzes the folate-dependent formation of 5-methyl-uridine at position 54 (M-5-U54) in all tRNAs. This is Methylenetetrahydrofolate--tRNA-(uracil-5-)-methyltransferase TrmFO from Streptococcus pneumoniae (strain ATCC 700669 / Spain 23F-1).